Consider the following 194-residue polypeptide: Peptidyl-tRNA hydrolase (194 aa).

Tyr-17 provides a ligand contact to tRNA. Catalysis depends on His-22, which acts as the Proton acceptor. Residues Phe-68, Asn-70, and Asn-116 each contribute to the tRNA site.

Belongs to the PTH family. In terms of assembly, monomer.

It is found in the cytoplasm. The catalysed reaction is an N-acyl-L-alpha-aminoacyl-tRNA + H2O = an N-acyl-L-amino acid + a tRNA + H(+). In terms of biological role, hydrolyzes ribosome-free peptidyl-tRNAs (with 1 or more amino acids incorporated), which drop off the ribosome during protein synthesis, or as a result of ribosome stalling. Catalyzes the release of premature peptidyl moieties from peptidyl-tRNA molecules trapped in stalled 50S ribosomal subunits, and thus maintains levels of free tRNAs and 50S ribosomes. The sequence is that of Peptidyl-tRNA hydrolase from Shewanella woodyi (strain ATCC 51908 / MS32).